We begin with the raw amino-acid sequence, 448 residues long: Cysteine--tRNA ligase (448 aa).

Residue C29 participates in Zn(2+) binding. The short motif at 31–41 (PTVYNYIHIGN) is the 'HIGH' region element. Zn(2+) contacts are provided by C212, H237, and E241. The 'KMSKS' region signature appears at 269–273 (KMSKS). K272 is an ATP binding site.

The protein belongs to the class-I aminoacyl-tRNA synthetase family. As to quaternary structure, monomer. Requires Zn(2+) as cofactor.

The protein resides in the cytoplasm. The catalysed reaction is tRNA(Cys) + L-cysteine + ATP = L-cysteinyl-tRNA(Cys) + AMP + diphosphate. This Streptococcus equi subsp. zooepidemicus (strain MGCS10565) protein is Cysteine--tRNA ligase.